Here is a 169-residue protein sequence, read N- to C-terminus: Probable GPI-anchored adhesin-like protein PGA22 (169 aa).

The first 18 residues, 1-18, serve as a signal peptide directing secretion; that stretch reads MKYSTLAWLVIASYTVFA. N-linked (GlcNAc...) asparagine glycans are attached at residues N87, N104, N111, and N118. G140 carries GPI-anchor amidated glycine lipidation. Positions 141–169 are cleaved as a propeptide — removed in mature form; that stretch reads PALTTTTVAEAFSLAAGASLGYLVALLFL.

It is found in the cell membrane. In terms of biological role, putative adhesin which may be involved in cell adhesion and virulence. This chain is Probable GPI-anchored adhesin-like protein PGA22 (PGA22), found in Candida albicans (strain SC5314 / ATCC MYA-2876) (Yeast).